A 315-amino-acid chain; its full sequence is O-antigen chain rhamnosyltransferase WbaN (315 aa).

This sequence belongs to the glycosyltransferase 2 family.

It catalyses the reaction alpha-D-galactosyl-di-trans,octa-cis-undecaprenyl diphosphate + dTDP-beta-L-rhamnose = alpha-L-rhamnosyl-(1-&gt;3)-alpha-D-galactosyl-1-diphospho-di-trans,octa-cis-undecaprenol + dTDP + H(+). It participates in bacterial outer membrane biogenesis; LPS O-antigen biosynthesis. Its function is as follows. Rhamnosyltransferase involved in the biosynthesis of the repeat unit of the lipopolysaccharide (LPS) O-antigen region. Catalyzes the addition of a rhamnose to the galactosyl-undecaprenyl diphosphate intermediate. This is O-antigen chain rhamnosyltransferase WbaN from Salmonella anatum.